Here is a 253-residue protein sequence, read N- to C-terminus: Small ribosomal subunit protein uS2 (253 aa).

Ser-2 bears the N-acetylserine mark. Positions 212–253 (QQAAEEAAAGEEDDEAKEEVAAEEQTEAADWAEGQSEEVASW) are disordered. Over residues 219 to 238 (AAGEEDDEAKEEVAAEEQTE) the composition is skewed to acidic residues.

It belongs to the universal ribosomal protein uS2 family. In terms of assembly, component of the small ribosomal subunit. Mature ribosomes consist of a small (40S) and a large (60S) subunit. The 40S subunit contains about 33 different proteins and 1 molecule of RNA (18S). The 60S subunit contains about 49 different proteins and 3 molecules of RNA (25S, 5.8S and 5S). Interacts with RPS21.

Its subcellular location is the cytoplasm. Its function is as follows. Required for the assembly and/or stability of the 40S ribosomal subunit. Required for the processing of the 20S rRNA-precursor to mature 18S rRNA in a late step of the maturation of 40S ribosomal subunits. In Eremothecium gossypii (strain ATCC 10895 / CBS 109.51 / FGSC 9923 / NRRL Y-1056) (Yeast), this protein is Small ribosomal subunit protein uS2.